The chain runs to 68 residues: Large ribosomal subunit protein uL29 (68 aa).

It belongs to the universal ribosomal protein uL29 family.

The sequence is that of Large ribosomal subunit protein uL29 (rpl29) from Thermoplasma acidophilum (strain ATCC 25905 / DSM 1728 / JCM 9062 / NBRC 15155 / AMRC-C165).